Here is a 67-residue protein sequence, read N- to C-terminus: Small, acid-soluble spore protein 2 (67 aa).

Belongs to the alpha/beta-type SASP family.

In terms of biological role, SASP are bound to spore DNA. They are double-stranded DNA-binding proteins that cause DNA to change to an a-like conformation. They protect the DNA backbone from chemical and enzymatic cleavage and are thus involved in dormant spore's high resistance to UV light. This is Small, acid-soluble spore protein 2 (Su-2) from Sporosarcina ureae.